The primary structure comprises 375 residues: Queuine tRNA-ribosyltransferase (375 aa).

The active-site Proton acceptor is D89. Residues 89–93 (DSGGF), D143, Q185, and G212 contribute to the substrate site. The segment at 243–249 (GVGKPED) is RNA binding. The active-site Nucleophile is the D262. The segment at 267–271 (TRNAR) is RNA binding; important for wobble base 34 recognition. Zn(2+)-binding residues include C300, C302, C305, and H331.

It belongs to the queuine tRNA-ribosyltransferase family. Homodimer. Within each dimer, one monomer is responsible for RNA recognition and catalysis, while the other monomer binds to the replacement base PreQ1. The cofactor is Zn(2+).

It carries out the reaction 7-aminomethyl-7-carbaguanine + guanosine(34) in tRNA = 7-aminomethyl-7-carbaguanosine(34) in tRNA + guanine. The protein operates within tRNA modification; tRNA-queuosine biosynthesis. Its function is as follows. Catalyzes the base-exchange of a guanine (G) residue with the queuine precursor 7-aminomethyl-7-deazaguanine (PreQ1) at position 34 (anticodon wobble position) in tRNAs with GU(N) anticodons (tRNA-Asp, -Asn, -His and -Tyr). Catalysis occurs through a double-displacement mechanism. The nucleophile active site attacks the C1' of nucleotide 34 to detach the guanine base from the RNA, forming a covalent enzyme-RNA intermediate. The proton acceptor active site deprotonates the incoming PreQ1, allowing a nucleophilic attack on the C1' of the ribose to form the product. After dissociation, two additional enzymatic reactions on the tRNA convert PreQ1 to queuine (Q), resulting in the hypermodified nucleoside queuosine (7-(((4,5-cis-dihydroxy-2-cyclopenten-1-yl)amino)methyl)-7-deazaguanosine). The protein is Queuine tRNA-ribosyltransferase of Pseudoalteromonas translucida (strain TAC 125).